The chain runs to 87 residues: MNIFGIGLPEMIVILVVALLIFGPKKLPEIGRSLGQAINSFKAGARDFENEFKREAKHLEEGVKVSTSASEPEKVVDVSSATNTNKN.

Residues 3-23 form a helical membrane-spanning segment; sequence IFGIGLPEMIVILVVALLIFG. The tract at residues 61–87 is disordered; the sequence is EGVKVSTSASEPEKVVDVSSATNTNKN.

Belongs to the TatA/E family. Forms a complex with TatC.

The protein localises to the cell inner membrane. Its function is as follows. Part of the twin-arginine translocation (Tat) system that transports large folded proteins containing a characteristic twin-arginine motif in their signal peptide across membranes. TatA could form the protein-conducting channel of the Tat system. The sequence is that of Sec-independent protein translocase protein TatA from Trichodesmium erythraeum (strain IMS101).